Consider the following 246-residue polypeptide: MVYSNTYMLLGLGVFVLLSSHVLAYNMRADPSIHDSTLDDQKSNDFVKTASIAECPPGPDTYLELSDSTLDDQKSMDYVKDASTVDHNCPPGPHTYLELSAWLQEEQNSIDKVKKVLRTDEAPDNQKGLEYKDARHNDGPIEISTRTEKDNFIPSDGPIEISTRTENENFIPSDEPIEISTGTEKENFISSDEPSEISSGAEKENFIPSVSQVDWRTFHAKYPWIKKDGPNTVTGSRKLLNDIAIK.

The first 24 residues, Met-1–Ala-24, serve as a signal peptide directing secretion.

Its subcellular location is the symbiosome. It localises to the peribacteroid space. Functionally, involved in the development and function of nodules. It might participate in the biological process of symbiotic nitrogen fixation. The polypeptide is Nodulin-25 (NMS-25) (Medicago sativa (Alfalfa)).